Reading from the N-terminus, the 494-residue chain is Potassium voltage-gated channel subfamily A member 2 (494 aa).

Residues Met-1–Asp-25 form a disordered region. The tetramerization domain stretch occupies residues Met-1–Leu-124. Residues Met-1–Gly-159 are Cytoplasmic-facing. Residues Pro-160 to Leu-181 traverse the membrane as a helical segment. Residues Glu-182–Pro-216 lie on the Extracellular side of the membrane. N-linked (GlcNAc...) asparagine glycosylation occurs at Asn-203. A helical membrane pass occupies residues Phe-217–Ala-238. Cys-239 is lipidated: S-palmitoyl cysteine. The Cytoplasmic portion of the chain corresponds to Cys-239–Val-249. Residues Met-250 to Ala-270 form a helical membrane-spanning segment. The Extracellular portion of the chain corresponds to Glu-271 to Ser-284. The chain crosses the membrane as a helical; Voltage-sensor span at residues Leu-285 to His-305. At Ser-306–Met-320 the chain is on the cytoplasmic side. The interval Lys-307–Met-320 is S4-S5 linker. Residues Arg-321 to Tyr-342 form a helical membrane-spanning segment. The Extracellular segment spans residues Phe-343–Ile-356. Positions Pro-357–Thr-368 form an intramembrane region, helical. The short motif at Thr-369–Asp-374 is the Selectivity filter element. Residues Thr-369–Val-376 lie within the membrane without spanning it. The Extracellular portion of the chain corresponds to Pro-377–Lys-383. A helical transmembrane segment spans residues Ile-384 to Tyr-412. The Cytoplasmic portion of the chain corresponds to His-413–Val-494. A PDZ-binding motif is present at residues Thr-492 to Val-494.

This sequence belongs to the potassium channel family. A (Shaker) (TC 1.A.1.2) subfamily. Kv1.2/KCNA2 sub-subfamily. Homotetramer and heterotetramer with other family members. In terms of tissue distribution, expressed in oligodendrocytes.

The protein localises to the cell membrane. The catalysed reaction is K(+)(in) = K(+)(out). In terms of biological role, voltage-gated potassium channel that mediates transmembrane potassium transport in excitable membranes, primarily in the brain and central nervous system. Prevents aberrant action potential firing and regulates neuronal output. Forms tetrameric potassium-selective channels through which potassium ions pass in accordance with their electrochemical gradient. The channel alternates between opened and closed conformations in response to the voltage difference across the membrane. Can form functional homotetrameric channels and heterotetrameric channels with other family members; the channels characteristics depend critically on the types of channel-forming alpha subunits that are present. Channel properties are modulated by cytoplasmic beta subunits that regulate the subcellular location of the alpha subunits. In vivo, membranes probably contain a mixture of heteromeric potassium channel complexes, making it difficult to assign currents observed in intact tissues to any particular potassium channel family member. Homotetrameric KCNA2 forms a delayed-rectifier potassium channel that opens in response to membrane depolarization, followed by slow spontaneous channel closure. Regulates neuronal excitability and plays a role as pacemaker in the regulation of neuronal action potentials. KCNA2-containing channels play a presynaptic role and prevent hyperexcitability and aberrant action potential firing. Response to toxins that are selective for KCNA2-containing potassium channels suggests that in Purkinje cells, dendritic subthreshold KCNA2-containing potassium channels prevent random spontaneous calcium spikes, suppressing dendritic hyperexcitability without hindering the generation of somatic action potentials, and thereby play an important role in motor coordination. Plays a role in the induction of long-term potentiation of neuron excitability in the CA3 layer of the hippocampus. This Oncorhynchus mykiss (Rainbow trout) protein is Potassium voltage-gated channel subfamily A member 2 (kcna2).